We begin with the raw amino-acid sequence, 728 residues long: Catalase B (728 aa).

Residues methionine 1 to alanine 15 form the signal peptide. Residues valine 16–arginine 27 constitute a propeptide that is removed on maturation. Histidine 102 is an active-site residue. N-linked (GlcNAc...) asparagine glycosylation occurs at asparagine 120. Residue asparagine 175 is part of the active site. Tyrosine 389 lines the heme pocket. 2 N-linked (GlcNAc...) asparagine glycosylation sites follow: asparagine 448 and asparagine 551.

This sequence belongs to the catalase family. Homotetramer. It depends on heme as a cofactor. N-glycosylated.

The protein localises to the secreted. The enzyme catalyses 2 H2O2 = O2 + 2 H2O. Its function is as follows. Occurs in almost all aerobically respiring organisms and serves to protect cells from the toxic effects of hydrogen peroxide. The chain is Catalase B (catB) from Aspergillus fumigatus (strain ATCC MYA-4609 / CBS 101355 / FGSC A1100 / Af293) (Neosartorya fumigata).